The chain runs to 610 residues: Serine/threonine-protein kinase RCK2 (610 aa).

Disordered regions lie at residues 1–55 (MLKI…QDKN) and 99–127 (TSVP…SLSE). Residues 11–24 (KKPDQADLSQESKK) show a composition bias toward basic and acidic residues. Residues 31–55 (RSSGTNNKDVSQITSSPKKSFQDKN) are compositionally biased toward polar residues. Residues Ser-46 and Ser-50 each carry the phosphoserine modification. One can recognise a Protein kinase domain in the interval 163-478 (YKLINKIGEG…IDQFLDDPWL (316 aa)). 169–177 (IGEGAFSKV) is an ATP binding site. Phosphoserine is present on Ser-187. Residue Lys-201 participates in ATP binding. Asp-313 serves as the catalytic Proton acceptor. Position 350 is a phosphothreonine (Thr-350). The interval 493–506 (KKAGTSERRHPHKK) is calmodulin-binding. Ser-520 bears the Phosphoserine mark. Residues 541 to 564 (EDRMGTRGGLGSLAEDEELEDSYS) are disordered.

Belongs to the protein kinase superfamily. CAMK Ser/Thr protein kinase family. CaMK subfamily. Post-translationally, autophosphorylated. Phosphorylated by HOG1 at Ser-520 after osmotic stress.

The protein localises to the cytoplasm. It catalyses the reaction L-seryl-[protein] + ATP = O-phospho-L-seryl-[protein] + ADP + H(+). It carries out the reaction L-threonyl-[protein] + ATP = O-phospho-L-threonyl-[protein] + ADP + H(+). Its activity is regulated as follows. Activated by Ser-520 phosphorylation by HOG1. Its function is as follows. Serine/threonine-protein kinase involved in a signal transduction pathway that is activated by changes in the osmolarity of the extracellular environment. The sequence is that of Serine/threonine-protein kinase RCK2 (RCK2) from Saccharomyces cerevisiae (strain ATCC 204508 / S288c) (Baker's yeast).